The primary structure comprises 63 residues: MVATVKDEHPTSEIDYNKIRSSREEMMRRFKEAHDKAKAEGTITYKRIKFKSSNEPLYGVLCG.

This is an uncharacterized protein from Enterobacteria phage T4 (Bacteriophage T4).